Consider the following 198-residue polypeptide: Pyridoxal 5'-phosphate synthase subunit PdxT (198 aa).

49 to 51 (GES) is an L-glutamine binding site. The active-site Nucleophile is Cys81. Residues Arg113 and 141 to 142 (IR) contribute to the L-glutamine site. Active-site charge relay system residues include His177 and Glu179.

Belongs to the glutaminase PdxT/SNO family. In the presence of PdxS, forms a dodecamer of heterodimers. Only shows activity in the heterodimer.

The catalysed reaction is aldehydo-D-ribose 5-phosphate + D-glyceraldehyde 3-phosphate + L-glutamine = pyridoxal 5'-phosphate + L-glutamate + phosphate + 3 H2O + H(+). It catalyses the reaction L-glutamine + H2O = L-glutamate + NH4(+). The protein operates within cofactor biosynthesis; pyridoxal 5'-phosphate biosynthesis. Functionally, catalyzes the hydrolysis of glutamine to glutamate and ammonia as part of the biosynthesis of pyridoxal 5'-phosphate. The resulting ammonia molecule is channeled to the active site of PdxS. In Mycobacterium tuberculosis (strain ATCC 25177 / H37Ra), this protein is Pyridoxal 5'-phosphate synthase subunit PdxT.